The following is a 591-amino-acid chain: Parathyroid hormone/parathyroid hormone-related peptide receptor (591 aa).

A signal peptide spans 1-26 (MGTARIAPSLALLLCCPVLSSAYALV). The Extracellular segment spans residues 27–188 (DADDVFTKEE…REREVFDRLG (162 aa)). Intrachain disulfides connect Cys-48–Cys-117, Cys-108–Cys-148, and Cys-131–Cys-170. The tract at residues 67-104 (KGWTPASTSGKPRKEKAPGKFYPESKENKDVPTGSRRR) is disordered. Over residues 81-96 (EKAPGKFYPESKENKD) the composition is skewed to basic and acidic residues. Residues Asn-151, Asn-161, Asn-166, and Asn-176 are each glycosylated (N-linked (GlcNAc...) asparagine). The helical transmembrane segment at 189–212 (MIYTVGYSMSLASLTVAVLILAYF) threads the bilayer. Residues 213–219 (RRLHCTR) lie on the Cytoplasmic side of the membrane. A helical transmembrane segment spans residues 220-239 (NYIHMHMFLSFMLRAASIFV). Residues 240-282 (KDAVLYSGFTLDEAERLTEEELHIIAQVPPPPAAAAVGYAGCR) lie on the Extracellular side of the membrane. A helical transmembrane segment spans residues 283 to 306 (VAVTFFLYFLATNYYWILVEGLYL). The Cytoplasmic portion of the chain corresponds to 307-320 (HSLIFMAFFSEKKY). Residues 321–342 (LWGFTIFGWGLPAVFVAVWVGV) form a helical membrane-spanning segment. The Extracellular segment spans residues 343–361 (RATLANTGCWDLSSGHKKW). Residues 362-382 (IIQVPILASVVLNFILFINII) form a helical membrane-spanning segment. Topologically, residues 383-409 (RVLATKLRETNAGRCDTRQQYRKLLRS) are cytoplasmic. Residues 410–428 (TLVLVPLFGVHYTVFMALP) form a helical membrane-spanning segment. At 429–440 (YTEVSGTLWQIQ) the chain is on the extracellular side. Residues 441 to 463 (MHYEMLFNSFQGFFVAIIYCFCN) form a helical membrane-spanning segment. The Cytoplasmic portion of the chain corresponds to 464 to 591 (GEVQAEIRKS…LLQEEWETVM (128 aa)). The Important for interaction with G proteins motif lies at 474–477 (WSRW).

It belongs to the G-protein coupled receptor 2 family. As to quaternary structure, homodimer in the absence of bound ligand. Peptide hormone binding leads to dissociation of the homodimer. N-glycosylated. As to expression, detected in kidney.

Its subcellular location is the cell membrane. G-protein-coupled receptor for parathyroid hormone (PTH) and for parathyroid hormone-related peptide (PTHLH). Ligand binding causes a conformation change that triggers signaling via guanine nucleotide-binding proteins (G proteins) and modulates the activity of downstream effectors, such as adenylate cyclase (cAMP). PTH1R is coupled to G(s) G alpha proteins and mediates activation of adenylate cyclase activity. PTHLH dissociates from PTH1R more rapidly than PTH; as consequence, the cAMP response induced by PTHLH decays faster than the response induced by PTH. This is Parathyroid hormone/parathyroid hormone-related peptide receptor (Pth1r) from Mus musculus (Mouse).